The following is a 258-amino-acid chain: Countin-1 (258 aa).

Positions 1–21 are cleaved as a signal peptide; it reads MNKLFSLILALFLVNSAVVSS. The region spanning 22 to 106 is the Saposin B-type domain; it reads LDSCSICVDF…EKISVCKTND (85 aa). Intrachain disulfides connect C25–C102, C28–C96, and C56–C69. 2 N-linked (GlcNAc...) asparagine glycosylation sites follow: N121 and N215. A compositionally biased stretch (low complexity) spans 233–248; that stretch reads AGSFSGSSQSTQTGAA. Residues 233 to 258 are disordered; it reads AGSFSGSSQSTQTGAASGSGSGFALF. Positions 249 to 258 are enriched in gly residues; that stretch reads SGSGSGFALF.

It belongs to the countin family. Component of the counting factor (CF) complex, which includes cf60, cf50, cf45-1 and ctnA.

It localises to the secreted. Cell-counting factor that limits the maximum size of the multicellular structure. May down-regulate the expression of gp24, which mediates cell adhesion. The sequence is that of Countin-1 (ctnA) from Dictyostelium discoideum (Social amoeba).